A 389-amino-acid polypeptide reads, in one-letter code: 8-amino-7-oxononanoate synthase (389 aa).

A substrate-binding site is contributed by R23. 114–115 (GY) is a binding site for pyridoxal 5'-phosphate. H139 contributes to the substrate binding site. 3 residues coordinate pyridoxal 5'-phosphate: S185, H213, and T242. Position 245 is an N6-(pyridoxal phosphate)lysine (K245). A substrate-binding site is contributed by T357.

It belongs to the class-II pyridoxal-phosphate-dependent aminotransferase family. BioF subfamily. As to quaternary structure, homodimer. Pyridoxal 5'-phosphate is required as a cofactor.

It catalyses the reaction 6-carboxyhexanoyl-[ACP] + L-alanine + H(+) = (8S)-8-amino-7-oxononanoate + holo-[ACP] + CO2. It functions in the pathway cofactor biosynthesis; biotin biosynthesis. In terms of biological role, catalyzes the decarboxylative condensation of pimeloyl-[acyl-carrier protein] and L-alanine to produce 8-amino-7-oxononanoate (AON), [acyl-carrier protein], and carbon dioxide. The polypeptide is 8-amino-7-oxononanoate synthase (Acidithiobacillus ferrooxidans (strain ATCC 23270 / DSM 14882 / CIP 104768 / NCIMB 8455) (Ferrobacillus ferrooxidans (strain ATCC 23270))).